Consider the following 414-residue polypeptide: 26S proteasome regulatory subunit 6B homolog (414 aa).

The tract at residues M1 to E33 is disordered. The span at N21–T30 shows a compositional bias: low complexity. Residues E55–V81 adopt a coiled-coil conformation. G202–T209 serves as a coordination point for ATP.

This sequence belongs to the AAA ATPase family.

Its subcellular location is the cytoplasm. It localises to the nucleus. Its function is as follows. The 26S proteasome is involved in the ATP-dependent degradation of ubiquitinated proteins. The regulatory (or ATPase) complex confers ATP dependency and substrate specificity to the 26S complex. The chain is 26S proteasome regulatory subunit 6B homolog from Helianthus annuus (Common sunflower).